Reading from the N-terminus, the 148-residue chain is Large ribosomal subunit protein uL15 (148 aa).

Residues 1–30 are compositionally biased toward basic residues; sequence MPSRLRKTRKLRGHVSHGHGRIGKHRKHPG. A disordered region spans residues 1–39; it reads MPSRLRKTRKLRGHVSHGHGRIGKHRKHPGGRGNAGGLH. H39 carries the (3S)-3-hydroxyhistidine modification. 2 positions are modified to N6-acetyllysine: K47 and K55. S68 carries the phosphoserine modification. The residue at position 110 (K110) is an N6-acetyllysine.

It belongs to the universal ribosomal protein uL15 family. As to quaternary structure, component of the large ribosomal subunit. In terms of processing, hydroxylated on His-39 by MINA.

It localises to the cytoplasm. Component of the large ribosomal subunit. The ribosome is a large ribonucleoprotein complex responsible for the synthesis of proteins in the cell. The chain is Large ribosomal subunit protein uL15 (RPL27A) from Macaca fascicularis (Crab-eating macaque).